An 872-amino-acid polypeptide reads, in one-letter code: Alanine--tRNA ligase (872 aa).

The Zn(2+) site is built by His567, His571, Cys669, and His673.

This sequence belongs to the class-II aminoacyl-tRNA synthetase family. Zn(2+) is required as a cofactor.

The protein localises to the cytoplasm. The enzyme catalyses tRNA(Ala) + L-alanine + ATP = L-alanyl-tRNA(Ala) + AMP + diphosphate. Functionally, catalyzes the attachment of alanine to tRNA(Ala) in a two-step reaction: alanine is first activated by ATP to form Ala-AMP and then transferred to the acceptor end of tRNA(Ala). Also edits incorrectly charged Ser-tRNA(Ala) and Gly-tRNA(Ala) via its editing domain. This Streptococcus thermophilus (strain CNRZ 1066) protein is Alanine--tRNA ligase.